A 334-amino-acid polypeptide reads, in one-letter code: Protein-glutamate methylesterase/protein-glutamine glutaminase 2 (334 aa).

A Response regulatory domain is found at 2–120; sequence NIGIVNDLPL…GAAGDTTKLL (119 aa). Aspartate 53 bears the 4-aspartylphosphate mark. One can recognise a CheB-type methylesterase domain in the interval 134–334; that stretch reads PGSSRLAGAA…AGELAALARI (201 aa). Active-site residues include serine 157, histidine 184, and aspartate 277.

Belongs to the CheB family. In terms of processing, phosphorylated by CheA. Phosphorylation of the N-terminal regulatory domain activates the methylesterase activity.

The protein localises to the cytoplasm. The catalysed reaction is [protein]-L-glutamate 5-O-methyl ester + H2O = L-glutamyl-[protein] + methanol + H(+). The enzyme catalyses L-glutaminyl-[protein] + H2O = L-glutamyl-[protein] + NH4(+). Involved in chemotaxis. Part of a chemotaxis signal transduction system that modulates chemotaxis in response to various stimuli. Catalyzes the demethylation of specific methylglutamate residues introduced into the chemoreceptors (methyl-accepting chemotaxis proteins or MCP) by CheR. Also mediates the irreversible deamidation of specific glutamine residues to glutamic acid. The protein is Protein-glutamate methylesterase/protein-glutamine glutaminase 2 of Burkholderia orbicola (strain AU 1054).